The following is an 862-amino-acid chain: Chaperone protein ClpB 1 (862 aa).

A Clp R domain is found at 5 to 147; it reads AEQFTEQAWA…KEAITAVRGN (143 aa). Repeat stretches follow at residues 8 to 72 and 84 to 147; these read FTEQ…LQRL and LGRS…VRGN. The tract at residues 160-341 is NBD1; that stretch reads ESLAKYGRDL…RRFQQVLVDQ (182 aa). Residue 207–214 coordinates ATP; it reads GEPGVGKT. Positions 342–550 are linker; the sequence is PTVPDTISIL…IAEVIAKWTG (209 aa). The stretch at 392–526 forms a coiled coil; the sequence is IDLVDESAAR…QEDLLEDEDG (135 aa). The interval 560–771 is NBD2; it reads EMEKLLQLED…RLDDQIIFRS (212 aa). 610-617 is a binding site for ATP; it reads GPTGVGKT. The interval 772-862 is C-terminal; sequence LEKEELRRIV…DAGDDKLSIS (91 aa).

Belongs to the ClpA/ClpB family. Homohexamer. The oligomerization is ATP-dependent.

The protein localises to the cytoplasm. Part of a stress-induced multi-chaperone system, it is involved in the recovery of the cell from heat-induced damage, in cooperation with DnaK, DnaJ and GrpE. Acts before DnaK, in the processing of protein aggregates. Protein binding stimulates the ATPase activity; ATP hydrolysis unfolds the denatured protein aggregates, which probably helps expose new hydrophobic binding sites on the surface of ClpB-bound aggregates, contributing to the solubilization and refolding of denatured protein aggregates by DnaK. In Parasynechococcus marenigrum (strain WH8102), this protein is Chaperone protein ClpB 1 (clpB1).